Reading from the N-terminus, the 264-residue chain is Phycocyanobilin:ferredoxin oxidoreductase (264 aa).

It belongs to the HY2 family.

It carries out the reaction (2R,3Z)-phycocyanobilin + 4 oxidized [2Fe-2S]-[ferredoxin] = biliverdin IXalpha + 4 reduced [2Fe-2S]-[ferredoxin] + 4 H(+). Functionally, catalyzes the four-electron reduction of biliverdin IX-alpha (2-electron reduction at both the A and D rings); the reaction proceeds via an isolatable 2-electron intermediate, 181,182-dihydrobiliverdin. The chain is Phycocyanobilin:ferredoxin oxidoreductase (pcyA) from Prochlorococcus marinus (strain MIT 9313).